The sequence spans 775 residues: Glutamine--tRNA ligase (775 aa).

Alanine 2 carries the N-acetylalanine modification. Residue serine 70 is modified to Phosphoserine. ATP-binding positions include 271–273 (EPN) and 277–283 (HIGHAKA). Aspartate 303 provides a ligand contact to L-glutamine. An N6-acetyllysine modification is found at lysine 309. Tyrosine 438 is a binding site for L-glutamine. ATP-binding positions include threonine 457, 486-487 (RL), and 494-496 (VSK). Phosphoserine is present on serine 495.

The protein belongs to the class-I aminoacyl-tRNA synthetase family. Monomer. Part of a multisubunit complex that groups tRNA ligases for Arg (RARS1), Asp (DARS1), Gln (QARS1), Ile (IARS1), Leu (LARS1), Lys (KARS1), Met (MARS1) the bifunctional ligase for Glu and Pro (EPRS1) and the auxiliary subunits AIMP1/p43, AIMP2/p38 and EEF1E1/p18. Interacts with RARS1. Part of a complex composed of RARS1, QARS1 and AIMP1. Detected in dorsal root ganglia (at protein level). Detected in dorsal root ganglia.

Its subcellular location is the cytoplasm. The protein resides in the cytosol. It catalyses the reaction tRNA(Gln) + L-glutamine + ATP = L-glutaminyl-tRNA(Gln) + AMP + diphosphate. Glutamine--tRNA ligase. Plays a critical role in brain development. The polypeptide is Glutamine--tRNA ligase (Qars1) (Rattus norvegicus (Rat)).